Consider the following 276-residue polypeptide: Diaminopimelate epimerase (276 aa).

Substrate-binding residues include asparagine 13, glutamine 46, and asparagine 66. The active-site Proton donor is cysteine 75. Substrate-binding positions include 76–77 (GN), asparagine 159, asparagine 192, and 210–211 (ER). The Proton acceptor role is filled by cysteine 219. Residue 220–221 (GT) coordinates substrate.

The protein belongs to the diaminopimelate epimerase family. In terms of assembly, homodimer.

The protein resides in the cytoplasm. It catalyses the reaction (2S,6S)-2,6-diaminopimelate = meso-2,6-diaminopimelate. The protein operates within amino-acid biosynthesis; L-lysine biosynthesis via DAP pathway; DL-2,6-diaminopimelate from LL-2,6-diaminopimelate: step 1/1. In terms of biological role, catalyzes the stereoinversion of LL-2,6-diaminopimelate (L,L-DAP) to meso-diaminopimelate (meso-DAP), a precursor of L-lysine and an essential component of the bacterial peptidoglycan. This Pseudomonas savastanoi pv. phaseolicola (strain 1448A / Race 6) (Pseudomonas syringae pv. phaseolicola (strain 1448A / Race 6)) protein is Diaminopimelate epimerase.